The chain runs to 1445 residues: Protein HUA2-LIKE 1 (1445 aa).

Positions 20 to 77 (LGDLVLAKVKGFPAWPAKIGQPEDWNQAPDPKKHFVQFYGTGEIGFVTPPDIQPFTSE) constitute a PWWP domain. 7 disordered regions span residues 133–197 (KYLN…SPDP), 211–302 (TCTD…DLNI), 319–356 (FENELGKSASGADESKRAAKRPRSEDAKDQKQCKSKRL), 409–439 (EHTSVSSFPGSLVKEGANHPEQKISSSSDSD), 460–491 (DDDDEDPKTPVHGGLSNIPIASTDAPKSANAS), 641–685 (GIPK…TSTP), and 797–835 (LTPSNHGRQSSSSNQAGTEENEERRFSSGHRSVGGSLSG). 2 stretches are compositionally biased toward polar residues: residues 173–187 (QDSSISNNRNTSPSS) and 211–225 (TCTDHSDGTGNNLVN). Composition is skewed to basic and acidic residues over residues 228–257 (RIIRKTTDDSNKRCKDEVRAKRVPDSRAAT), 274–293 (GQDHGSKKGQDHGCRKESSD), and 331–350 (DESKRAAKRPRSEDAKDQKQ). 2 stretches are compositionally biased toward polar residues: residues 660–673 (RVSSSHSQTANQRS) and 797–814 (LTPSNHGRQSSSSNQAGT). The 142-residue stretch at 838–979 (EAAISRDTFE…RYIGDLGASG (142 aa)) folds into the CID domain. The disordered stretch occupies residues 1110–1203 (PATTCATELP…SLPLQPGFAP (94 aa)). Residues 1124–1170 (GSPPLPHESPPSPPPQPPSSPPPPSSPPQLAPAPPPSDHCLPPPTAP) show a composition bias toward pro residues.

Expressed throughout young primordia, and vegetative and reproductive apices.

Its subcellular location is the nucleus. Functionally, probable transcription factor that acts with partial redundancy with HULK2 and HULK3. Plays diverse and essential roles in the control of plant development, physiology and flowering time. This chain is Protein HUA2-LIKE 1, found in Arabidopsis thaliana (Mouse-ear cress).